The primary structure comprises 168 residues: Acetone carboxylase gamma subunit (168 aa).

As to quaternary structure, heterohexamer of two alpha, two beta and two gamma subunits. The cofactor is Fe cation. Mg(2+) serves as cofactor. Zn(2+) is required as a cofactor.

It catalyses the reaction acetone + hydrogencarbonate + 2 ATP + 3 H2O = acetoacetate + 2 AMP + 4 phosphate + 4 H(+). Functionally, catalyzes the carboxylation of acetone to form acetoacetate. Has a reduced activity on butanone, and no activity on 2-pentatone, 3-pentatone, 2-hexanone, chloroacetone, pyruvate, phosphoenolpyruvate, acetaldehyde, propionaldehyde and propylene oxide. This Xanthobacter autotrophicus (strain ATCC BAA-1158 / Py2) protein is Acetone carboxylase gamma subunit.